A 118-amino-acid polypeptide reads, in one-letter code: Small ribosomal subunit protein uS13 (118 aa).

Residues 94–118 are disordered; that stretch reads SLPLRGQRTKTNARTRKGPRKAIKK.

The protein belongs to the universal ribosomal protein uS13 family. Part of the 30S ribosomal subunit. Forms a loose heterodimer with protein S19. Forms two bridges to the 50S subunit in the 70S ribosome.

Functionally, located at the top of the head of the 30S subunit, it contacts several helices of the 16S rRNA. In the 70S ribosome it contacts the 23S rRNA (bridge B1a) and protein L5 of the 50S subunit (bridge B1b), connecting the 2 subunits; these bridges are implicated in subunit movement. Contacts the tRNAs in the A and P-sites. This is Small ribosomal subunit protein uS13 from Pseudoalteromonas atlantica (strain T6c / ATCC BAA-1087).